Consider the following 284-residue polypeptide: 2-dehydro-3-deoxyphosphooctonate aldolase (284 aa).

This sequence belongs to the KdsA family.

The protein resides in the cytoplasm. The enzyme catalyses D-arabinose 5-phosphate + phosphoenolpyruvate + H2O = 3-deoxy-alpha-D-manno-2-octulosonate-8-phosphate + phosphate. It functions in the pathway carbohydrate biosynthesis; 3-deoxy-D-manno-octulosonate biosynthesis; 3-deoxy-D-manno-octulosonate from D-ribulose 5-phosphate: step 2/3. The protein operates within bacterial outer membrane biogenesis; lipopolysaccharide biosynthesis. This chain is 2-dehydro-3-deoxyphosphooctonate aldolase, found in Burkholderia orbicola (strain MC0-3).